Consider the following 570-residue polypeptide: Sulfite reductase [NADPH] hemoprotein beta-component (570 aa).

4 residues coordinate [4Fe-4S] cluster: Cys434, Cys440, Cys479, and Cys483. Cys483 contacts siroheme.

Belongs to the nitrite and sulfite reductase 4Fe-4S domain family. Alpha(8)-beta(8). The alpha component is a flavoprotein, the beta component is a hemoprotein. Requires siroheme as cofactor. The cofactor is [4Fe-4S] cluster.

It carries out the reaction hydrogen sulfide + 3 NADP(+) + 3 H2O = sulfite + 3 NADPH + 4 H(+). It participates in sulfur metabolism; hydrogen sulfide biosynthesis; hydrogen sulfide from sulfite (NADPH route): step 1/1. Functionally, component of the sulfite reductase complex that catalyzes the 6-electron reduction of sulfite to sulfide. This is one of several activities required for the biosynthesis of L-cysteine from sulfate. This chain is Sulfite reductase [NADPH] hemoprotein beta-component, found in Escherichia coli O7:K1 (strain IAI39 / ExPEC).